The following is a 257-amino-acid chain: Diphthine synthase (257 aa).

Residues I11, D89, I92, 117–118 (SV), L169, L210, and H235 contribute to the S-adenosyl-L-methionine site.

This sequence belongs to the diphthine synthase family. Homodimer.

The catalysed reaction is 2-[(3S)-amino-3-carboxypropyl]-L-histidyl-[translation elongation factor 2] + 3 S-adenosyl-L-methionine = diphthine-[translation elongation factor 2] + 3 S-adenosyl-L-homocysteine + 3 H(+). Its pathway is protein modification; peptidyl-diphthamide biosynthesis. S-adenosyl-L-methionine-dependent methyltransferase that catalyzes the trimethylation of the amino group of the modified target histidine residue in translation elongation factor 2 (EF-2), to form an intermediate called diphthine. The three successive methylation reactions represent the second step of diphthamide biosynthesis. This Saccharolobus islandicus (strain L.S.2.15 / Lassen #1) (Sulfolobus islandicus) protein is Diphthine synthase.